A 323-amino-acid polypeptide reads, in one-letter code: tRNA U34 carboxymethyltransferase (323 aa).

Residues Lys91, Trp105, Lys110, Gly130, 152-154 (DPT), 181-182 (IE), Met196, Tyr200, and Arg315 contribute to the carboxy-S-adenosyl-L-methionine site.

The protein belongs to the class I-like SAM-binding methyltransferase superfamily. CmoB family. In terms of assembly, homotetramer.

It catalyses the reaction carboxy-S-adenosyl-L-methionine + 5-hydroxyuridine(34) in tRNA = 5-carboxymethoxyuridine(34) in tRNA + S-adenosyl-L-homocysteine + H(+). Catalyzes carboxymethyl transfer from carboxy-S-adenosyl-L-methionine (Cx-SAM) to 5-hydroxyuridine (ho5U) to form 5-carboxymethoxyuridine (cmo5U) at position 34 in tRNAs. The protein is tRNA U34 carboxymethyltransferase of Shigella dysenteriae serotype 1 (strain Sd197).